Reading from the N-terminus, the 264-residue chain is Thymidylate synthase (264 aa).

Position 21 (R21) interacts with dUMP. (6R)-5,10-methylene-5,6,7,8-tetrahydrofolate is bound at residue H51. DUMP is bound at residue 126 to 127 (RR). C146 functions as the Nucleophile in the catalytic mechanism. DUMP contacts are provided by residues 166-169 (RSAD), N177, and 207-209 (HLY). D169 contacts (6R)-5,10-methylene-5,6,7,8-tetrahydrofolate. A263 contacts (6R)-5,10-methylene-5,6,7,8-tetrahydrofolate.

Belongs to the thymidylate synthase family. Bacterial-type ThyA subfamily. In terms of assembly, homodimer.

It localises to the cytoplasm. The enzyme catalyses dUMP + (6R)-5,10-methylene-5,6,7,8-tetrahydrofolate = 7,8-dihydrofolate + dTMP. It participates in pyrimidine metabolism; dTTP biosynthesis. Catalyzes the reductive methylation of 2'-deoxyuridine-5'-monophosphate (dUMP) to 2'-deoxythymidine-5'-monophosphate (dTMP) while utilizing 5,10-methylenetetrahydrofolate (mTHF) as the methyl donor and reductant in the reaction, yielding dihydrofolate (DHF) as a by-product. This enzymatic reaction provides an intracellular de novo source of dTMP, an essential precursor for DNA biosynthesis. The polypeptide is Thymidylate synthase (Pseudomonas aeruginosa (strain LESB58)).